The following is a 248-amino-acid chain: ATP synthase subunit a, chloroplastic (248 aa).

The next 4 membrane-spanning stretches (helical) occupy residues 34 to 54, 95 to 115, 134 to 154, and 203 to 223; these read LHGQVFIVSWLVMLALIIFAL, VPYISTVFLFIFGANWAGALI, INVTVALALLTSISYFYAGIS, and VFALLVPILIPLPVMTLGLFA.

The protein belongs to the ATPase A chain family. F-type ATPases have 2 components, CF(1) - the catalytic core - and CF(0) - the membrane proton channel. CF(1) has five subunits: alpha(3), beta(3), gamma(1), delta(1), epsilon(1). CF(0) has four main subunits: a, b, b' and c.

It localises to the plastid. It is found in the chloroplast thylakoid membrane. Its function is as follows. Key component of the proton channel; it plays a direct role in the translocation of protons across the membrane. This is ATP synthase subunit a, chloroplastic from Guillardia theta (Cryptophyte).